Consider the following 261-residue polypeptide: Pantothenate synthetase (261 aa).

29–36 (MGALHNGH) is a binding site for ATP. His36 acts as the Proton donor in catalysis. Gln60 provides a ligand contact to (R)-pantoate. Residue Gln60 participates in beta-alanine binding. 147-150 (GEKD) contributes to the ATP binding site. Gln153 serves as a coordination point for (R)-pantoate. 184–187 (LSSR) serves as a coordination point for ATP.

The protein belongs to the pantothenate synthetase family. As to quaternary structure, homodimer.

It is found in the cytoplasm. The enzyme catalyses (R)-pantoate + beta-alanine + ATP = (R)-pantothenate + AMP + diphosphate + H(+). Its pathway is cofactor biosynthesis; (R)-pantothenate biosynthesis; (R)-pantothenate from (R)-pantoate and beta-alanine: step 1/1. Functionally, catalyzes the condensation of pantoate with beta-alanine in an ATP-dependent reaction via a pantoyl-adenylate intermediate. This is Pantothenate synthetase from Francisella tularensis subsp. holarctica (strain FTNF002-00 / FTA).